Reading from the N-terminus, the 320-residue chain is MRSAQVYRWQIPMDAGVVLRDRRLKTRDGLYVCLREGEREGWGEISPLPGFSQETWEEAQSVLLAWVNNWLAGDCELPQMPSVAFGVSCALAELADTLPQAANYRAAPLCNGDPDDLILKLADMPGEKVAKVKVGLYEAVRDGMVVNLLLEAIPDLHLRLDANRAWTPLKGQQFAKYVNPDYRHRIAFLEEPCKTRDDSRAFARETGIAIAWDESLREPDFAFVAEEGVRAVVIKPTLTGSLDKVREQVQAAHALGLTAVISSSIESSLGLTQLARIAAWLTPDTIPGLDTLDLMQAQQVRRWPGSLLPLVDVDALEQLL.

The Proton donor role is filled by Lys133. Asp161, Glu190, and Asp213 together coordinate Mg(2+). Lys235 serves as the catalytic Proton acceptor.

Belongs to the mandelate racemase/muconate lactonizing enzyme family. MenC type 1 subfamily. The cofactor is a divalent metal cation.

It carries out the reaction (1R,6R)-6-hydroxy-2-succinyl-cyclohexa-2,4-diene-1-carboxylate = 2-succinylbenzoate + H2O. The protein operates within quinol/quinone metabolism; 1,4-dihydroxy-2-naphthoate biosynthesis; 1,4-dihydroxy-2-naphthoate from chorismate: step 4/7. It functions in the pathway quinol/quinone metabolism; menaquinone biosynthesis. In terms of biological role, converts 2-succinyl-6-hydroxy-2,4-cyclohexadiene-1-carboxylate (SHCHC) to 2-succinylbenzoate (OSB). The chain is o-succinylbenzoate synthase from Escherichia coli O6:H1 (strain CFT073 / ATCC 700928 / UPEC).